The sequence spans 113 residues: Defense protein 2 (113 aa).

The protein belongs to the attacin/sarcotoxin-2 family.

It is found in the secreted. Functionally, has antibacterial activity against both Gram-positive and Gram-negative bacteria. The polypeptide is Defense protein 2 (Lonomia obliqua (Moth)).